Consider the following 436-residue polypeptide: Hydrogenobyrinate a,c-diamide synthase (436 aa).

One can recognise a GATase cobBQ-type domain in the interval 244–435; that stretch reads HIAVARDDAF…MHVIDFCGEK (192 aa). The active-site Nucleophile is Cys-327.

This sequence belongs to the CobB/CbiA family. Mg(2+) serves as cofactor.

The enzyme catalyses hydrogenobyrinate + 2 L-glutamine + 2 ATP + 2 H2O = hydrogenobyrinate a,c-diamide + 2 L-glutamate + 2 ADP + 2 phosphate + 2 H(+). Its pathway is cofactor biosynthesis; adenosylcobalamin biosynthesis; cob(II)yrinate a,c-diamide from precorrin-2 (aerobic route): step 9/10. Its function is as follows. Catalyzes the ATP-dependent amidation of the two carboxylate groups at positions a and c of hydrogenobyrinate, using either L-glutamine or ammonia as the nitrogen source. The sequence is that of Hydrogenobyrinate a,c-diamide synthase from Brucella anthropi (strain ATCC 49188 / DSM 6882 / CCUG 24695 / JCM 21032 / LMG 3331 / NBRC 15819 / NCTC 12168 / Alc 37) (Ochrobactrum anthropi).